A 378-amino-acid polypeptide reads, in one-letter code: Mannitol-1-phosphate 5-dehydrogenase (378 aa).

4-15 (SVHFGAGNIGRG) serves as a coordination point for NAD(+).

It belongs to the mannitol dehydrogenase family.

The catalysed reaction is D-mannitol 1-phosphate + NAD(+) = beta-D-fructose 6-phosphate + NADH + H(+). The sequence is that of Mannitol-1-phosphate 5-dehydrogenase from Streptococcus pneumoniae serotype 4 (strain ATCC BAA-334 / TIGR4).